A 267-amino-acid polypeptide reads, in one-letter code: Ribosomal RNA small subunit methyltransferase A (267 aa).

S-adenosyl-L-methionine contacts are provided by N18, L20, G45, E66, D91, and N112.

This sequence belongs to the class I-like SAM-binding methyltransferase superfamily. rRNA adenine N(6)-methyltransferase family. RsmA subfamily.

It localises to the cytoplasm. It carries out the reaction adenosine(1518)/adenosine(1519) in 16S rRNA + 4 S-adenosyl-L-methionine = N(6)-dimethyladenosine(1518)/N(6)-dimethyladenosine(1519) in 16S rRNA + 4 S-adenosyl-L-homocysteine + 4 H(+). Its function is as follows. Specifically dimethylates two adjacent adenosines (A1518 and A1519) in the loop of a conserved hairpin near the 3'-end of 16S rRNA in the 30S particle. May play a critical role in biogenesis of 30S subunits. The polypeptide is Ribosomal RNA small subunit methyltransferase A (Shewanella amazonensis (strain ATCC BAA-1098 / SB2B)).